A 237-amino-acid polypeptide reads, in one-letter code: Protein XpsM (237 aa).

The disordered stretch occupies residues M1–R21. The segment covering P10–R21 has biased composition (pro residues).

The chain is Protein XpsM (xpsM) from Xanthomonas campestris pv. campestris (strain ATCC 33913 / DSM 3586 / NCPPB 528 / LMG 568 / P 25).